The following is a 485-amino-acid chain: NADH-quinone oxidoreductase subunit N (485 aa).

14 consecutive transmembrane segments (helical) span residues 8 to 28 (LIALSPLLIVGLTVVVVMLCI), 35 to 55 (FVNATMTVIGLNIALLSLYFV), 75 to 95 (FYTGLVLLASLATSTFAYPWL), 105 to 125 (FYLLVLIAALGGILLSSANHL), 127 to 147 (SLFIGIELLSLPLFGLVGYAF), 159 to 179 (YMLLSAAASSFLLFGMALIYA), 203 to 223 (LLAGLGMMIVGLGFKLSLVPF), 235 to 255 (PAPVSTFLATAGKIAVFGAVM), 271 to 291 (IVLSIIAFASIMFGNVMAVSQ), 297 to 317 (LLGYSSIAHLGYLLVALIAVQ), 326 to 346 (VGVYLVGYLFSSLGAFGVVSL), 374 to 394 (AVMTVMMLSLAGIPMTLGFFG), 407 to 426 (LWWLTGAVVLGSAIGLYYYL), and 449 to 469 (ALTAGGVVVLISSIVVLFFGL).

It belongs to the complex I subunit 2 family. In terms of assembly, NDH-1 is composed of 13 different subunits. Subunits NuoA, H, J, K, L, M, N constitute the membrane sector of the complex.

Its subcellular location is the cell inner membrane. It catalyses the reaction a quinone + NADH + 5 H(+)(in) = a quinol + NAD(+) + 4 H(+)(out). In terms of biological role, NDH-1 shuttles electrons from NADH, via FMN and iron-sulfur (Fe-S) centers, to quinones in the respiratory chain. The immediate electron acceptor for the enzyme in this species is believed to be ubiquinone. Couples the redox reaction to proton translocation (for every two electrons transferred, four hydrogen ions are translocated across the cytoplasmic membrane), and thus conserves the redox energy in a proton gradient. In Pectobacterium atrosepticum (strain SCRI 1043 / ATCC BAA-672) (Erwinia carotovora subsp. atroseptica), this protein is NADH-quinone oxidoreductase subunit N.